The sequence spans 136 residues: Protein NrdI (136 aa).

It belongs to the NrdI family.

Probably involved in ribonucleotide reductase function. In Escherichia coli O7:K1 (strain IAI39 / ExPEC), this protein is Protein NrdI.